Reading from the N-terminus, the 365-residue chain is Peptide chain release factor 2 (365 aa).

Q252 carries the N5-methylglutamine modification.

It belongs to the prokaryotic/mitochondrial release factor family. In terms of processing, methylated by PrmC. Methylation increases the termination efficiency of RF2.

It is found in the cytoplasm. Functionally, peptide chain release factor 2 directs the termination of translation in response to the peptide chain termination codons UGA and UAA. This Pseudoalteromonas translucida (strain TAC 125) protein is Peptide chain release factor 2.